The chain runs to 163 residues: Transcriptional repressor NrdR (163 aa).

A zinc finger lies at 3–34 (CPFCAHPEDKVVDSRESKEGESIRRRRECLKC). Positions 49 to 139 (YMVVKKDGRR…VYLDFKDVRE (91 aa)) constitute an ATP-cone domain.

Belongs to the NrdR family. Zn(2+) is required as a cofactor.

Negatively regulates transcription of bacterial ribonucleotide reductase nrd genes and operons by binding to NrdR-boxes. The chain is Transcriptional repressor NrdR from Koribacter versatilis (strain Ellin345).